The sequence spans 148 residues: Putative pre-16S rRNA nuclease (148 aa).

The protein belongs to the YqgF nuclease family.

It localises to the cytoplasm. Could be a nuclease involved in processing of the 5'-end of pre-16S rRNA. This is Putative pre-16S rRNA nuclease from Chlamydia trachomatis serovar L2 (strain ATCC VR-902B / DSM 19102 / 434/Bu).